Consider the following 225-residue polypeptide: Thymidylate kinase (225 aa).

Position 12-19 (12-19) interacts with ATP; it reads GGEGAGKS.

It belongs to the thymidylate kinase family.

It catalyses the reaction dTMP + ATP = dTDP + ADP. Its function is as follows. Phosphorylation of dTMP to form dTDP in both de novo and salvage pathways of dTTP synthesis. The polypeptide is Thymidylate kinase (Chelativorans sp. (strain BNC1)).